The sequence spans 528 residues: CTD kinase subunit alpha (528 aa).

Polar residues predominate over residues 1-15 (MSYNNGNTYSKSYSR). Positions 1–148 (MSYNNGNTYS…NTSNDIKNGY (148 aa)) are disordered. Phosphoserine; by autocatalysis is present on Ser14. Residues 37–44 (PPKRIRTD) carry the Nuclear localization signal motif. A compositionally biased stretch (polar residues) spans 45-103 (SGYQSNMDNISSHRVNSNDQPGHTKSRGNNNLSRYNDTSFQTSSRYQGSRYNNNNTSYE). Residues 104 to 118 (NRPKSIKRDETKAEF) show a composition bias toward basic and acidic residues. The span at 134-144 (YNNSSNTSNDI) shows a compositional bias: polar residues. A Protein kinase domain is found at 183-469 (YLRIMQVGEG…ATEALQSDYF (287 aa)). Residues 189–197 (VGEGTYGKV) and Lys212 contribute to the ATP site. Asp306 acts as the Proton acceptor in catalysis. At Thr338 the chain carries Phosphothreonine. Residues 497 to 528 (QKRPNILSTNTNNKGNGNSNNNNNNNNDDDDK) are disordered. The span at 504–522 (STNTNNKGNGNSNNNNNNN) shows a compositional bias: low complexity.

The protein belongs to the protein kinase superfamily. CMGC Ser/Thr protein kinase family. CDC2/CDKX subfamily. CTDK-I consists of three subunits, CTK1, CTK2 and CTK3 (also called alpha, beta and gamma). Interacts directly with the CTK2 and CTK3 subunits, this interaction is required for kinase activity. Interacts with RNA polymerase I. Interacts with SNF1, but only at low glucose concentrations. Interacts with translating ribosomes. Post-translationally, phosphorylated on Thr-338 by CAK1. Phosphorylation is essential for the elevated CTD Ser-2 phosphorylation and required to activate transcription of stationary-phase genes during the diauxic shift.

It localises to the nucleus. The protein localises to the nucleolus. It is found in the cytoplasm. The catalysed reaction is [DNA-directed RNA polymerase] + ATP = phospho-[DNA-directed RNA polymerase] + ADP + H(+). Catalytic subunit of the CTDK-I complex, which hyperphosphorylates the C-terminal heptapeptide repeat domain (CTD) of the largest RNA polymerase II subunit. CTDK-I phosphorylates 'Ser-5' if the CTD substrate is not phosphorylated at 'Ser-5', but will phosphorylate 'Ser-2' of a CTD substrate if 'Ser-5' is already phosphorylated. CTDK-I is also more reactive toward substrates that are prephosphorylated at 'Ser-2' or 'Ser-5' compared with an unphosphorylated CTD substrate, therefore efficiently creating doubly phosphorylated CTD repeats. Involved in RNA polymerase II transcriptional elongation, and through PTI1, pre-mRNA 3'-end processing. Participates in both positive and negative regulation of CTD phosphorylation. Required for DNA damage induced transcription, including the expression of the RNR genes, and reprogramming of gene expression upon amino acid starvation. Required for SET2 mediated H3K36 methylation. Also regulates H3K4 methylation. Controls the maintenance of suppressive chromatin in the coding regions of genes by both promoting H3K36 methylation, which leads to histone deacetylation, and catalyzing phosphorylation of the CTD required to localize H3K4 chromatin modification specifically to the 5' ends of genes, thereby creating a boundary for H3K4 methylation that prevents a mark associated with transcriptional initiation from spreading into the bodies of genes. Involved in RNA polymerase I transcription. Involved in telomere maintenance. Acts together with SNF1 to induce GSY2 transcription in response to glucose limitation. Involved in the adaptation to alternative carbon sources, including galactose, glycerol and ethanol, but not raffinose. Required for the integrity of the rDNA locus. Functions in translation elongation by enhancing decoding fidelity. Needed for translational accuracy by phosphorylating RPS2. This is CTD kinase subunit alpha (CTK1) from Saccharomyces cerevisiae (strain ATCC 204508 / S288c) (Baker's yeast).